A 529-amino-acid chain; its full sequence is UPF0159 protein TC_0921 (529 aa).

ThyX domains lie at 38-274 (KGAL…AEPH) and 309-511 (KGVK…LKFV).

The protein belongs to the UPF0159 family.

The chain is UPF0159 protein TC_0921 from Chlamydia muridarum (strain MoPn / Nigg).